Consider the following 378-residue polypeptide: Cobalt-precorrin-5B C(1)-methyltransferase (378 aa).

It belongs to the CbiD family.

The enzyme catalyses Co-precorrin-5B + S-adenosyl-L-methionine = Co-precorrin-6A + S-adenosyl-L-homocysteine. The protein operates within cofactor biosynthesis; adenosylcobalamin biosynthesis; cob(II)yrinate a,c-diamide from sirohydrochlorin (anaerobic route): step 6/10. In terms of biological role, catalyzes the methylation of C-1 in cobalt-precorrin-5B to form cobalt-precorrin-6A. This chain is Cobalt-precorrin-5B C(1)-methyltransferase, found in Synechocystis sp. (strain ATCC 27184 / PCC 6803 / Kazusa).